Consider the following 486-residue polypeptide: Probable transporter MCH1 (486 aa).

The next 6 helical transmembrane spans lie at 31–51 (ISFFISLFSCLTSGSIMLFSL), 69–89 (FIASLSAIGMYLCLPVLGYLA), 91–111 (CYGPSLLSLISIWFFVPSYFV), 132–152 (FGICFFFIGLATSSLYFSSLL), 164–184 (LAISLPVTCYGLSTLLGSQLM), and 204–224 (FFGVLYLVMGILNFVSSSVVS). Residues 236–260 (EMEEADEESPLMTSRSRHSHHSCED) form a disordered region. A helical membrane pass occupies residues 280-300 (FINFLKDKSAWLLLASLILNI). A glycan (N-linked (GlcNAc...) asparagine) is linked at Asn-322. Transmembrane regions (helical) follow at residues 327–348 (VSIMAASSTVTRLAMGGLSDYL) and 357–377 (ICRVNLLIINLAIGIVGQFMV). Asn-390 is a glycosylation site (N-linked (GlcNAc...) asparagine). A run of 2 helical transmembrane segments spans residues 395–415 (GGLFTIYPTIVASIWGIDMMG) and 417–437 (TWGSFMIAPAIGSIGFSIFYG). The N-linked (GlcNAc...) asparagine glycan is linked to Asn-457. A helical membrane pass occupies residues 458–478 (LTAVGLSVSLILIIIVWKGIW).

Belongs to the major facilitator superfamily.

It localises to the vacuole membrane. Functionally, probable transporter. This is Probable transporter MCH1 (MCH1) from Debaryomyces hansenii (strain ATCC 36239 / CBS 767 / BCRC 21394 / JCM 1990 / NBRC 0083 / IGC 2968) (Yeast).